The following is a 447-amino-acid chain: Argininosuccinate synthase (447 aa).

Residues 20–28 (AFSGGLDTS) and alanine 46 each bind ATP. Tyrosine 102 provides a ligand contact to L-citrulline. Positions 132 and 134 each coordinate ATP. Residues threonine 134, asparagine 138, and aspartate 139 each contribute to the L-aspartate site. Asparagine 138 is an L-citrulline binding site. An ATP-binding site is contributed by aspartate 139. L-citrulline is bound by residues arginine 142 and serine 195. Aspartate 197 contacts ATP. The L-citrulline site is built by threonine 204, glutamate 206, and glutamate 283.

It belongs to the argininosuccinate synthase family. Type 2 subfamily. Homotetramer.

Its subcellular location is the cytoplasm. The enzyme catalyses L-citrulline + L-aspartate + ATP = 2-(N(omega)-L-arginino)succinate + AMP + diphosphate + H(+). The protein operates within amino-acid biosynthesis; L-arginine biosynthesis; L-arginine from L-ornithine and carbamoyl phosphate: step 2/3. The protein is Argininosuccinate synthase (argG) of Neisseria meningitidis serogroup A / serotype 4A (strain DSM 15465 / Z2491).